A 219-amino-acid polypeptide reads, in one-letter code: ATP-dependent Clp protease proteolytic subunit 1 (219 aa).

Catalysis depends on S113, which acts as the Nucleophile. The active site involves H138.

It belongs to the peptidase S14 family. Fourteen ClpP subunits assemble into 2 heptameric rings which stack back to back to give a disk-like structure with a central cavity, resembling the structure of eukaryotic proteasomes.

The protein resides in the cytoplasm. It carries out the reaction Hydrolysis of proteins to small peptides in the presence of ATP and magnesium. alpha-casein is the usual test substrate. In the absence of ATP, only oligopeptides shorter than five residues are hydrolyzed (such as succinyl-Leu-Tyr-|-NHMec, and Leu-Tyr-Leu-|-Tyr-Trp, in which cleavage of the -Tyr-|-Leu- and -Tyr-|-Trp bonds also occurs).. Cleaves peptides in various proteins in a process that requires ATP hydrolysis. Has a chymotrypsin-like activity. Plays a major role in the degradation of misfolded proteins. Probably partially responsible for degradation of ECF sigma factor SigR prime. The sequence is that of ATP-dependent Clp protease proteolytic subunit 1 from Streptomyces coelicolor (strain ATCC BAA-471 / A3(2) / M145).